The primary structure comprises 388 residues: Flavin-dependent monooxygenase (388 aa).

Residue arginine 54 participates in NADPH binding. Residues aspartate 61, arginine 117, and aspartate 311 each coordinate FAD.

It belongs to the aromatic-ring hydroxylase family. TetX subfamily. In terms of assembly, monomer. FAD serves as cofactor.

It localises to the cytoplasm. It catalyses the reaction a tetracycline + NADPH + O2 + H(+) = an 11a-hydroxytetracycline + NADP(+) + H2O. The enzyme catalyses tetracycline + NADPH + O2 + H(+) = 11a-hydroxytetracycline + NADP(+) + H2O. It carries out the reaction oxytetracycline + NADPH + O2 + H(+) = 11a-hydroxy-oxytetracycline + NADP(+) + H2O. An FAD-requiring monooxygenase active on some tetracycline antibiotic derivatives, which leads to their inactivation. Hydroxylates carbon 11a of tetracycline and some analogs. In terms of biological role, confers resistance to tetracycline via an oxidoreductase activity; NADPH is more active than NAD. Expression in E.coli leads to breakdown of tetracycline. Confers resistance to doxycycline, chlortetracycline, oxytetracycline and minocycline. In Bacteroides fragilis, this protein is Flavin-dependent monooxygenase.